Here is a 93-residue protein sequence, read N- to C-terminus: Stromal cell-derived factor 1 (93 aa).

The signal sequence occupies residues 1–21 (MDAKVVAVLALVLAALCLSDG). The short motif at 22-23 (KP) is the Receptor activation motif element. Residues 29 to 33 (RCPCR) form a receptor and heparin binding region. 2 cysteine pairs are disulfide-bonded: cysteine 30–cysteine 55 and cysteine 32–cysteine 71. Receptor binding stretches follow at residues 39-41 (VAR), 48-50 (KIL), and 60-70 (VARLKNNNRQV). Heparin is bound by residues 41 to 51 (RANVKHLKILN), arginine 62, glutamine 69, and lysine 85.

Belongs to the intercrine alpha (chemokine CxC) family. In terms of assembly, monomer or homodimer; in equilibrium. Dimer formation is induced by non acidic pH and the presence of multivalent anions, and by binding to CXCR4 or heparin. Monomeric form is required for full chemotactic activity and resistance to ischemia/reperfusion injury, whereas the dimeric form acts as a partial agonist of CXCR4, stimulating Ca2+ mobilization but with no chemotactic activity and instead acts as a selective antagonist that blocks chemotaxis induced by the monomeric form. Interacts with the N-terminus of ACKR3. Interacts with integrin subunit ITGB3 (via the allosteric site (site 2)). Interacts with TNFAIP6 (via Link domain).

The protein resides in the secreted. Chemoattractant active on T-lymphocytes and monocytes but not neutrophils. Activates the C-X-C chemokine receptor CXCR4 to induce a rapid and transient rise in the level of intracellular calcium ions and chemotaxis. Also binds to atypical chemokine receptor ACKR3, which activates the beta-arrestin pathway and acts as a scavenger receptor for SDF-1. Acts as a positive regulator of monocyte migration and a negative regulator of monocyte adhesion via the LYN kinase. Binds to the allosteric site (site 2) of integrins and activates integrins ITGAV:ITGB3, ITGA4:ITGB1 and ITGA5:ITGB1 in a CXCR4-independent manner. Stimulates migration of monocytes and T-lymphocytes through its receptors, CXCR4 and ACKR3, and decreases monocyte adherence to surfaces coated with ICAM-1, a ligand for beta-2 integrins. SDF1A/CXCR4 signaling axis inhibits beta-2 integrin LFA-1 mediated adhesion of monocytes to ICAM-1 through LYN kinase. Plays a protective role after myocardial infarction. Has several critical functions during embryonic development; required for B-cell lymphopoiesis, myelopoiesis in bone marrow and heart ventricular septum formation. Stimulates the proliferation of bone marrow-derived B-cell progenitors in the presence of IL7 as well as growth of stromal cell-dependent pre-B-cells. The protein is Stromal cell-derived factor 1 (CXCL12) of Felis catus (Cat).